Reading from the N-terminus, the 344-residue chain is Anthranilate phosphoribosyltransferase 2 (344 aa).

Residues glycine 81, 84–85, threonine 89, 91–94, 109–117, and alanine 121 contribute to the 5-phospho-alpha-D-ribose 1-diphosphate site; these read GD, NIST, and KHGNRALSS. Anthranilate is bound at residue glycine 81. Serine 93 is a binding site for Mg(2+). Asparagine 112 is a binding site for anthranilate. Residue arginine 167 participates in anthranilate binding. Mg(2+) is bound by residues aspartate 226 and glutamate 227.

The protein belongs to the anthranilate phosphoribosyltransferase family. In terms of assembly, homodimer. It depends on Mg(2+) as a cofactor.

It catalyses the reaction N-(5-phospho-beta-D-ribosyl)anthranilate + diphosphate = 5-phospho-alpha-D-ribose 1-diphosphate + anthranilate. It functions in the pathway amino-acid biosynthesis; L-tryptophan biosynthesis; L-tryptophan from chorismate: step 2/5. Its function is as follows. Catalyzes the transfer of the phosphoribosyl group of 5-phosphorylribose-1-pyrophosphate (PRPP) to anthranilate to yield N-(5'-phosphoribosyl)-anthranilate (PRA). The protein is Anthranilate phosphoribosyltransferase 2 of Ralstonia nicotianae (strain ATCC BAA-1114 / GMI1000) (Ralstonia solanacearum).